An 83-amino-acid chain; its full sequence is NAD(P)H-quinone oxidoreductase subunit L (83 aa).

Helical transmembrane passes span 15-35 (LMVL…VPLL) and 53-73 (LSAY…APFL).

It belongs to the complex I NdhL subunit family. In terms of assembly, NDH-1 can be composed of about 15 different subunits; different subcomplexes with different compositions have been identified which probably have different functions.

The protein localises to the cellular thylakoid membrane. It carries out the reaction a plastoquinone + NADH + (n+1) H(+)(in) = a plastoquinol + NAD(+) + n H(+)(out). It catalyses the reaction a plastoquinone + NADPH + (n+1) H(+)(in) = a plastoquinol + NADP(+) + n H(+)(out). In terms of biological role, NDH-1 shuttles electrons from an unknown electron donor, via FMN and iron-sulfur (Fe-S) centers, to quinones in the respiratory and/or the photosynthetic chain. The immediate electron acceptor for the enzyme in this species is believed to be plastoquinone. Couples the redox reaction to proton translocation, and thus conserves the redox energy in a proton gradient. Cyanobacterial NDH-1 also plays a role in inorganic carbon-concentration. The protein is NAD(P)H-quinone oxidoreductase subunit L of Prochlorococcus marinus (strain MIT 9303).